A 187-amino-acid chain; its full sequence is ATP synthase subunit b 2 (187 aa).

Over residues 1–12 (MAQERAEHESAD) the composition is skewed to basic and acidic residues. Positions 1-31 (MAQERAEHESADQHTTSTGVPHEGQGEPFPP) are disordered. The chain crosses the membrane as a helical span at residues 40 to 60 (LLIWLAISFLLLYALMSKLVL).

It belongs to the ATPase B chain family. F-type ATPases have 2 components, F(1) - the catalytic core - and F(0) - the membrane proton channel. F(1) has five subunits: alpha(3), beta(3), gamma(1), delta(1), epsilon(1). F(0) has three main subunits: a(1), b(2) and c(10-14). The alpha and beta chains form an alternating ring which encloses part of the gamma chain. F(1) is attached to F(0) by a central stalk formed by the gamma and epsilon chains, while a peripheral stalk is formed by the delta and b chains.

It is found in the cell inner membrane. F(1)F(0) ATP synthase produces ATP from ADP in the presence of a proton or sodium gradient. F-type ATPases consist of two structural domains, F(1) containing the extramembraneous catalytic core and F(0) containing the membrane proton channel, linked together by a central stalk and a peripheral stalk. During catalysis, ATP synthesis in the catalytic domain of F(1) is coupled via a rotary mechanism of the central stalk subunits to proton translocation. Functionally, component of the F(0) channel, it forms part of the peripheral stalk, linking F(1) to F(0). The b'-subunit is a diverged and duplicated form of b found in plants and photosynthetic bacteria. The sequence is that of ATP synthase subunit b 2 (atpF2) from Beijerinckia indica subsp. indica (strain ATCC 9039 / DSM 1715 / NCIMB 8712).